A 647-amino-acid polypeptide reads, in one-letter code: UvrABC system protein C (647 aa).

Residues 16–95 (VEPGVYRFRD…IKEFDPRFNV (80 aa)) enclose the GIY-YIG domain. In terms of domain architecture, UVR spans 208–243 (DRFARELEQQMNAAAAELDFERAARLRDDLGALKRA).

The protein belongs to the UvrC family. In terms of assembly, interacts with UvrB in an incision complex.

It localises to the cytoplasm. Its function is as follows. The UvrABC repair system catalyzes the recognition and processing of DNA lesions. UvrC both incises the 5' and 3' sides of the lesion. The N-terminal half is responsible for the 3' incision and the C-terminal half is responsible for the 5' incision. The protein is UvrABC system protein C of Mycolicibacterium paratuberculosis (strain ATCC BAA-968 / K-10) (Mycobacterium paratuberculosis).